A 143-amino-acid chain; its full sequence is Transcriptional regulator MraZ (143 aa).

2 SpoVT-AbrB domains span residues 5–47 and 76–119; these read EFRH…PMKE and ATEC…DEAR.

It belongs to the MraZ family. In terms of assembly, forms oligomers.

The protein localises to the cytoplasm. The protein resides in the nucleoid. This chain is Transcriptional regulator MraZ, found in Enterococcus hirae.